Consider the following 195-residue polypeptide: ATP synthase subunit b (195 aa).

A helical membrane pass occupies residues 28-48; sequence IFPNVYVLIAHVISLIFLLLL.

This sequence belongs to the ATPase B chain family. As to quaternary structure, F-type ATPases have 2 components, F(1) - the catalytic core - and F(0) - the membrane proton channel. F(1) has five subunits: alpha(3), beta(3), gamma(1), delta(1), epsilon(1). F(0) has three main subunits: a(1), b(2) and c(10-14). The alpha and beta chains form an alternating ring which encloses part of the gamma chain. F(1) is attached to F(0) by a central stalk formed by the gamma and epsilon chains, while a peripheral stalk is formed by the delta and b chains.

It is found in the cell membrane. In terms of biological role, f(1)F(0) ATP synthase produces ATP from ADP in the presence of a proton or sodium gradient. F-type ATPases consist of two structural domains, F(1) containing the extramembraneous catalytic core and F(0) containing the membrane proton channel, linked together by a central stalk and a peripheral stalk. During catalysis, ATP synthesis in the catalytic domain of F(1) is coupled via a rotary mechanism of the central stalk subunits to proton translocation. Component of the F(0) channel, it forms part of the peripheral stalk, linking F(1) to F(0). The polypeptide is ATP synthase subunit b (Malacoplasma penetrans (strain HF-2) (Mycoplasma penetrans)).